We begin with the raw amino-acid sequence, 165 residues long: Mid1-interacting protein 1-like (165 aa).

The tract at residues 46–67 is disordered; the sequence is DQESHASVSHNNNNNNEPSFPN.

The protein belongs to the SPOT14 family.

The protein resides in the nucleus. The protein localises to the cytoplasm. Its subcellular location is the cytoskeleton. In terms of biological role, involved in stabilization of microtubules. May play a role in the regulation of lipogenesis. The polypeptide is Mid1-interacting protein 1-like (Danio rerio (Zebrafish)).